Reading from the N-terminus, the 156-residue chain is Ribosomal RNA large subunit methyltransferase H (156 aa).

Residues Leu73, Gly104, and 123–128 (LSPLTF) contribute to the S-adenosyl-L-methionine site.

It belongs to the RNA methyltransferase RlmH family. In terms of assembly, homodimer.

It localises to the cytoplasm. The enzyme catalyses pseudouridine(1915) in 23S rRNA + S-adenosyl-L-methionine = N(3)-methylpseudouridine(1915) in 23S rRNA + S-adenosyl-L-homocysteine + H(+). In terms of biological role, specifically methylates the pseudouridine at position 1915 (m3Psi1915) in 23S rRNA. The sequence is that of Ribosomal RNA large subunit methyltransferase H from Thioalkalivibrio sulfidiphilus (strain HL-EbGR7).